The sequence spans 498 residues: ATP synthase subunit beta, chloroplastic (498 aa).

ATP is bound at residue 172 to 179 (GGAGVGKT).

This sequence belongs to the ATPase alpha/beta chains family. In terms of assembly, F-type ATPases have 2 components, CF(1) - the catalytic core - and CF(0) - the membrane proton channel. CF(1) has five subunits: alpha(3), beta(3), gamma(1), delta(1), epsilon(1). CF(0) has four main subunits: a(1), b(1), b'(1) and c(9-12).

The protein resides in the plastid. It is found in the chloroplast thylakoid membrane. The catalysed reaction is ATP + H2O + 4 H(+)(in) = ADP + phosphate + 5 H(+)(out). In terms of biological role, produces ATP from ADP in the presence of a proton gradient across the membrane. The catalytic sites are hosted primarily by the beta subunits. This Jasminum nudiflorum (Winter jasmine) protein is ATP synthase subunit beta, chloroplastic.